Reading from the N-terminus, the 350-residue chain is Renin receptor (350 aa).

The signal sequence occupies residues 1-17 (MAVLVVLLSSLVSSALA). The Extracellular portion of the chain corresponds to 18-302 (NEFSILRSPG…YNLAYKYNLE (285 aa)). Residues 303-323 (YSVVFNLVLWIMTGLALAVII) traverse the membrane as a helical segment. The Cytoplasmic segment spans residues 324–350 (TSYNIWNMDPGYDSIIYRMTNQKIRMD). The short motif at 346–350 (KIRMD) is the Mediates retrograde transport to the ER element.

As to quaternary structure, interacts with renin. Accessory component of the multisubunit proton-transporting vacuolar (V)-ATPase protein pump. Interacts (via N-terminus) with ATP6AP1 (via N-terminus). Interacts with ATP6V0D1; ATP6V0D1 is a V-ATPase complex subunit and the interaction promotes V-ATPase complex assembly. Interacts with TMEM9; TMEM9 is a V-ATPase assembly regulator and the interaction induces the interaction with ATP6V0D1. Interacts with VMA21 (via N-terminus); VMA21 is a V-ATPase accessory component. Phosphorylated. Post-translationally, proteolytically cleaved by a furin-like convertase in the trans-Golgi network to generate N- and C-terminal fragments. As to expression, expressed in the brain.

The protein resides in the endoplasmic reticulum membrane. It is found in the lysosome membrane. Its subcellular location is the cytoplasmic vesicle. It localises to the autophagosome membrane. The protein localises to the cell projection. The protein resides in the dendritic spine membrane. It is found in the axon. Its subcellular location is the endosome membrane. It localises to the clathrin-coated vesicle membrane. The protein localises to the secretory vesicle. The protein resides in the synaptic vesicle membrane. In terms of biological role, multifunctional protein which functions as a renin, prorenin cellular receptor and is involved in the assembly of the lysosomal proton-transporting V-type ATPase (V-ATPase) and the acidification of the endo-lysosomal system. May mediate renin-dependent cellular responses by activating ERK1 and ERK2. By increasing the catalytic efficiency of renin in AGT/angiotensinogen conversion to angiotensin I, may also play a role in the renin-angiotensin system (RAS). Through its function in V-type ATPase (v-ATPase) assembly and acidification of the lysosome it regulates protein degradation and may control different signaling pathways important for proper brain development, synapse morphology and synaptic transmission. In Rattus norvegicus (Rat), this protein is Renin receptor (Atp6ap2).